We begin with the raw amino-acid sequence, 158 residues long: pH 6 antigen (158 aa).

An N-terminal signal peptide occupies residues 1–26 (MKMKCFAKNALAVTTLMIAACGMANA).

In terms of assembly, forms a homomer composed of subunits assembled in a large structure.

The protein resides in the fimbrium. Functionally, fibrillar structure, part of fimbriae, necessary for full virulence. The chain is pH 6 antigen (psaA) from Yersinia pestis.